Here is a 241-residue protein sequence, read N- to C-terminus: Probable cobalt-factor III C(17)-methyltransferase (241 aa).

This sequence belongs to the precorrin methyltransferase family.

It catalyses the reaction Co(II)-factor III + S-adenosyl-L-methionine + H(+) = Co(II)-factor IV + S-adenosyl-L-homocysteine. The protein operates within cofactor biosynthesis; adenosylcobalamin biosynthesis; cob(II)yrinate a,c-diamide from sirohydrochlorin (anaerobic route): step 3/10. Its function is as follows. Methyltransferase that likely catalyzes the ring contraction and methylation of C-17 in cobalt-factor III to form cobalt-factor IV. May also convert cobalt-precorrin-3 to cobalt-precorrin-4. This Salmonella typhimurium (strain LT2 / SGSC1412 / ATCC 700720) protein is Probable cobalt-factor III C(17)-methyltransferase (cbiH).